We begin with the raw amino-acid sequence, 182 residues long: Small ribosomal subunit protein uS4c (182 aa).

The 62-residue stretch at 82 to 143 (MRLDNILFRL…KQRSKALIQN (62 aa)) folds into the S4 RNA-binding domain.

This sequence belongs to the universal ribosomal protein uS4 family. As to quaternary structure, part of the 30S ribosomal subunit. Contacts protein S5. The interaction surface between S4 and S5 is involved in control of translational fidelity.

Its subcellular location is the plastid. The protein localises to the chloroplast. One of the primary rRNA binding proteins, it binds directly to 16S rRNA where it nucleates assembly of the body of the 30S subunit. In terms of biological role, with S5 and S12 plays an important role in translational accuracy. The protein is Small ribosomal subunit protein uS4c (rps4) of Libertia formosa (Snowy mermaid).